Here is a 373-residue protein sequence, read N- to C-terminus: Carbamoyl phosphate synthase small chain (373 aa).

The segment at 1 to 179 (MSGKAQLVLE…AYIVEPEGPP (179 aa)) is CPSase. Residues Ser-47, Gly-230, and Gly-232 each contribute to the L-glutamine site. The region spanning 182 to 373 (TVAALDLGIK…QFIELMEGDR (192 aa)) is the Glutamine amidotransferase type-1 domain. The Nucleophile role is filled by Cys-258. L-glutamine-binding residues include Phe-259, Gln-262, Asn-300, Gly-302, and Phe-303. Residues His-348 and Glu-350 contribute to the active site.

Belongs to the CarA family. In terms of assembly, composed of two chains; the small (or glutamine) chain promotes the hydrolysis of glutamine to ammonia, which is used by the large (or ammonia) chain to synthesize carbamoyl phosphate. Tetramer of heterodimers (alpha,beta)4.

It catalyses the reaction hydrogencarbonate + L-glutamine + 2 ATP + H2O = carbamoyl phosphate + L-glutamate + 2 ADP + phosphate + 2 H(+). It carries out the reaction L-glutamine + H2O = L-glutamate + NH4(+). Its pathway is amino-acid biosynthesis; L-arginine biosynthesis; carbamoyl phosphate from bicarbonate: step 1/1. It functions in the pathway pyrimidine metabolism; UMP biosynthesis via de novo pathway; (S)-dihydroorotate from bicarbonate: step 1/3. Its function is as follows. Small subunit of the glutamine-dependent carbamoyl phosphate synthetase (CPSase). CPSase catalyzes the formation of carbamoyl phosphate from the ammonia moiety of glutamine, carbonate, and phosphate donated by ATP, constituting the first step of 2 biosynthetic pathways, one leading to arginine and/or urea and the other to pyrimidine nucleotides. The small subunit (glutamine amidotransferase) binds and cleaves glutamine to supply the large subunit with the substrate ammonia. This chain is Carbamoyl phosphate synthase small chain, found in Mycolicibacterium paratuberculosis (strain ATCC BAA-968 / K-10) (Mycobacterium paratuberculosis).